The following is a 490-amino-acid chain: Membrane-bound lytic murein transglycosylase F (490 aa).

The signal sequence occupies residues 1–32; the sequence is MFALTAYRLRCAAWLLATGIFLLLAGCSEAKA. Residues 33–269 form a non-LT domain region; it reads PTALERVQKE…RLKDRYYGHV (237 aa). The LT domain stretch occupies residues 270-490; the sequence is DVLGYVGAYT…PEEDSGDEKL (221 aa). Glu316 is an active-site residue. The segment at 467-490 is disordered; the sequence is AESGLHLPGVNKTRPEEDSGDEKL. Over residues 479 to 490 the composition is skewed to basic and acidic residues; it reads TRPEEDSGDEKL.

In the N-terminal section; belongs to the bacterial solute-binding protein 3 family. This sequence in the C-terminal section; belongs to the transglycosylase Slt family.

The protein localises to the cell outer membrane. It catalyses the reaction Exolytic cleavage of the (1-&gt;4)-beta-glycosidic linkage between N-acetylmuramic acid (MurNAc) and N-acetylglucosamine (GlcNAc) residues in peptidoglycan, from either the reducing or the non-reducing ends of the peptidoglycan chains, with concomitant formation of a 1,6-anhydrobond in the MurNAc residue.. Murein-degrading enzyme that degrades murein glycan strands and insoluble, high-molecular weight murein sacculi, with the concomitant formation of a 1,6-anhydromuramoyl product. Lytic transglycosylases (LTs) play an integral role in the metabolism of the peptidoglycan (PG) sacculus. Their lytic action creates space within the PG sacculus to allow for its expansion as well as for the insertion of various structures such as secretion systems and flagella. The chain is Membrane-bound lytic murein transglycosylase F from Pseudomonas aeruginosa (strain ATCC 15692 / DSM 22644 / CIP 104116 / JCM 14847 / LMG 12228 / 1C / PRS 101 / PAO1).